A 200-amino-acid chain; its full sequence is dITP/XTP pyrophosphatase (200 aa).

8–13 (TRNAGK) contributes to the substrate binding site. Asp-72 acts as the Proton acceptor in catalysis. Mg(2+) is bound at residue Asp-72. Substrate is bound by residues Ser-73, 155 to 158 (FGYD), Lys-178, and 183 to 184 (HR).

Belongs to the HAM1 NTPase family. As to quaternary structure, homodimer. Mg(2+) is required as a cofactor.

The enzyme catalyses XTP + H2O = XMP + diphosphate + H(+). It carries out the reaction dITP + H2O = dIMP + diphosphate + H(+). It catalyses the reaction ITP + H2O = IMP + diphosphate + H(+). Functionally, pyrophosphatase that catalyzes the hydrolysis of nucleoside triphosphates to their monophosphate derivatives, with a high preference for the non-canonical purine nucleotides XTP (xanthosine triphosphate), dITP (deoxyinosine triphosphate) and ITP. Seems to function as a house-cleaning enzyme that removes non-canonical purine nucleotides from the nucleotide pool, thus preventing their incorporation into DNA/RNA and avoiding chromosomal lesions. In Streptomyces coelicolor (strain ATCC BAA-471 / A3(2) / M145), this protein is dITP/XTP pyrophosphatase.